The chain runs to 489 residues: Cytochrome P450 monooxygenase bfoB (489 aa).

Residues 1–18 (MLALYLIAGLLVGLLVYR) form the signal peptide. N-linked (GlcNAc...) asparagine glycosylation is found at Asn-113, Asn-348, and Asn-386. Residue Cys-429 coordinates heme.

This sequence belongs to the cytochrome P450 family. Heme serves as cofactor.

The enzyme catalyses 2 fonsecin B + NADPH + O2 + H(+) = bifonsecin B + NADP(+) + 2 H2O. It carries out the reaction 2 rubrofusarin B + NADPH + O2 + 3 H(+) = nigerone + NADP(+) + 2 H2O. It participates in secondary metabolite biosynthesis. In terms of biological role, cytochrome P450 monooxygenase; part of the gene cluster that mediates the biosynthesis of bifonsecin B, a dimeric gamma-naphthopyrone. The first step in the biosynthesis of bifonsecin B is the production of gamma-naphthopyrone precursor YWA1 by the non-reducing polyketide synthase albA, via condensation of one acetyl-CoA starter unit with 6 malonyl-CoA units. YWA1 is then methylated by bfoE at position C-6 to yield foncesin which is further methylated at position C-8 by bfoD to produce fonsecin B. A key enzyme in the biosynthetic pathway is the cytochrome P450 monooxygenase bfoB which catalyzes the oxidative dimerization of fonsecin B to bifonsecin B. Bfob also catalyzes the oxidative dimerization of rubrofusarin B into nigerone. The stereoselectivity of bfoB is influenced by the two natural monomeric substrates; homodimerization of fonsecin B yields a stereochemically pure biaryl, M-foncerine B, while rubrofusarin B yields a mixture of enantiomers M- and P-nigerone. This is Cytochrome P450 monooxygenase bfoB from Aspergillus brasiliensis (strain CBS 101740 / IMI 381727 / IBT 21946).